Reading from the N-terminus, the 105-residue chain is T cell receptor alpha variable 40 (105 aa).

Positions 1–19 are cleaved as a signal peptide; sequence MNSSLDFLILILMFGGTSS. Residues 20–105 form the Ig-like domain; it reads NSVKQTGQIT…DSAVYYCLLG (86 aa). A glycan (N-linked (GlcNAc...) asparagine) is linked at asparagine 39. A disulfide bond links cysteine 40 and cysteine 102.

In terms of assembly, alpha-beta TR is a heterodimer composed of an alpha and beta chain; disulfide-linked. The alpha-beta TR is associated with the transmembrane signaling CD3 coreceptor proteins to form the TR-CD3 (TcR or TCR). The assembly of alpha-beta TR heterodimers with CD3 occurs in the endoplasmic reticulum where a single alpha-beta TR heterodimer associates with one CD3D-CD3E heterodimer, one CD3G-CD3E heterodimer and one CD247 homodimer forming a stable octameric structure. CD3D-CD3E and CD3G-CD3E heterodimers preferentially associate with TR alpha and TR beta chains, respectively. The association of the CD247 homodimer is the last step of TcR assembly in the endoplasmic reticulum and is required for transport to the cell surface.

Its subcellular location is the cell membrane. Functionally, v region of the variable domain of T cell receptor (TR) alpha chain that participates in the antigen recognition. Alpha-beta T cell receptors are antigen specific receptors which are essential to the immune response and are present on the cell surface of T lymphocytes. Recognize peptide-major histocompatibility (MH) (pMH) complexes that are displayed by antigen presenting cells (APC), a prerequisite for efficient T cell adaptive immunity against pathogens. Binding of alpha-beta TR to pMH complex initiates TR-CD3 clustering on the cell surface and intracellular activation of LCK that phosphorylates the ITAM motifs of CD3G, CD3D, CD3E and CD247 enabling the recruitment of ZAP70. In turn ZAP70 phosphorylates LAT, which recruits numerous signaling molecules to form the LAT signalosome. The LAT signalosome propagates signal branching to three major signaling pathways, the calcium, the mitogen-activated protein kinase (MAPK) kinase and the nuclear factor NF-kappa-B (NF-kB) pathways, leading to the mobilization of transcription factors that are critical for gene expression and essential for T cell growth and differentiation. The T cell repertoire is generated in the thymus, by V-(D)-J rearrangement. This repertoire is then shaped by intrathymic selection events to generate a peripheral T cell pool of self-MH restricted, non-autoaggressive T cells. Post-thymic interaction of alpha-beta TR with the pMH complexes shapes TR structural and functional avidity. This is T cell receptor alpha variable 40 from Homo sapiens (Human).